Consider the following 417-residue polypeptide: Serine/threonine-protein phosphatase 4 regulatory subunit 2 (417 aa).

The segment at 141 to 417 is disordered; the sequence is KNNSNSLNRM…EVTDDPMEQD (277 aa). Composition is skewed to polar residues over residues 158–170 and 186–196; these read NSPN…NING and APLTTNGLPES. Serine 159 bears the Phosphoserine mark. Positions 197–213 are enriched in basic and acidic residues; sequence TDSKDSELQLSEEKGHS. The span at 214-226 shows a compositional bias: low complexity; it reads DSSASESEVSLLS. Serine 226 carries the phosphoserine modification. The segment covering 243–258 has biased composition (basic and acidic residues); sequence HEVKRLKFDKEGDVRE. The span at 259-268 shows a compositional bias: polar residues; sequence TASQTVSGEV. Residues 283 to 296 are compositionally biased toward basic and acidic residues; it reads PDKDRESRTRQHCT. The segment covering 297–313 has biased composition (acidic residues); sequence EEEEEEEEEEEEEEEES. Positions 320–329 are enriched in basic and acidic residues; it reads MVPERKNQEK. Residues 367 to 376 show a composition bias toward low complexity; the sequence is SAGASRSGSD. Residues 378 to 392 show a composition bias toward polar residues; that stretch reads LETQESGGPPSSKTG. Over residues 402–417 the composition is skewed to acidic residues; it reads ESEEATEVTDDPMEQD.

It belongs to the PPP4R2 family. Serine/threonine-protein phosphatase 4 (PP4) occurs in different assemblies of the catalytic and one or more regulatory subunits. Component of the PP4 complexes PPP4C-PPP4R2, PPP4C-PPP4R2-PPP4R3A and PPP4C-PPP4R2-PPP4R3B. The PPP4C-PPP4R2 complex appears to be a tetramer composed of 2 molecules of PPP4C and 2 molecules of PPP4R2. Interacts with DDX20/GEMIN3 and GEMIN4. Interacts with RPA2; this DNA damage-dependent interaction recruits PPP4C leading to RPA2 dephosphorylation.

Its subcellular location is the cytoplasm. It is found in the cytoskeleton. It localises to the microtubule organizing center. The protein resides in the centrosome. The protein localises to the nucleus. Its function is as follows. Regulatory subunit of serine/threonine-protein phosphatase 4 (PP4). May regulate the activity of PPP4C at centrosomal microtubule organizing centers. Its interaction with the SMN complex leads to enhance the temporal localization of snRNPs, suggesting a role of PPP4C in maturation of spliceosomal snRNPs. The PPP4C-PPP4R2-PPP4R3A PP4 complex specifically dephosphorylates H2AX phosphorylated on 'Ser-140' (gamma-H2AX) generated during DNA replication and required for DNA double strand break repair. Mediates RPA2 dephosphorylation by recruiting PPP4C to RPA2 in a DNA damage-dependent manner. RPA2 dephosphorylation is required for the efficient RPA2-mediated recruitment of RAD51 to chromatin following double strand breaks, an essential step for DNA repair. This is Serine/threonine-protein phosphatase 4 regulatory subunit 2 (Ppp4r2) from Mus musculus (Mouse).